The chain runs to 127 residues: MPEVSSKGATISKKGFKKAVVKTQKKEGKKRKRTRKESYSIYIYKVLKQVHPDTGISSKAMSIMNSFVTDIFERIASEASRLAHYSKRSTISSREIQTAVRLLLPGELAKHAVSEGTKAVTKYTSSK.

Residues Met-1–Lys-36 form a disordered region. At Pro-2 the chain carries N-acetylproline. 7 positions are modified to N6-acetyllysine; alternate: Lys-7, Lys-13, Lys-14, Lys-17, Lys-18, Lys-22, and Lys-25. Lys-7, Lys-13, Lys-14, Lys-17, Lys-18, Lys-22, Lys-25, and Lys-36 each carry N6-crotonyllysine; alternate. Lys-7 and Lys-13 each carry N6-lactoyllysine; alternate. Lys-7 is covalently cross-linked (Glycyl lysine isopeptide (Lys-Gly) (interchain with G-Cter in SUMO2); alternate). Residues Lys-17, Lys-18, Lys-22, and Lys-25 each carry the N6-lactoyllysine; alternate modification. Residue Lys-22 forms a Glycyl lysine isopeptide (Lys-Gly) (interchain with G-Cter in SUMO2); alternate linkage. Lys-36 is modified (N6-succinyllysine; alternate). Residue Lys-36 forms a Glycyl lysine isopeptide (Lys-Gly) (interchain with G-Cter in ubiquitin); alternate linkage. At Ser-38 the chain carries Phosphoserine. Lys-45 bears the N6-lactoyllysine; alternate mark. Lys-48 bears the N6-methyllysine mark. The residue at position 59 (Lys-59) is an N6,N6-dimethyllysine. Arg-81 is modified (dimethylated arginine). Ser-86 carries the phosphoserine modification. Position 87 is an N6-acetyllysine; alternate (Lys-87). N6-lactoyllysine; alternate is present on Lys-87. Residue Lys-87 is modified to N6,N6,N6-trimethyllysine; alternate. Residues Arg-88 and Arg-94 each carry the omega-N-methylarginine modification. The residue at position 110 (Lys-110) is an N6-lactoyllysine; alternate. An N6-methyllysine modification is found at Lys-110. Phosphothreonine is present on Thr-117. N6-lactoyllysine; alternate is present on residues Lys-118 and Lys-122. N6-succinyllysine; alternate is present on residues Lys-118 and Lys-122. The residue at position 118 (Lys-118) is an N6-methylated lysine; alternate. Lys-122 is covalently cross-linked (Glycyl lysine isopeptide (Lys-Gly) (interchain with G-Cter in ubiquitin); alternate).

This sequence belongs to the histone H2B family. As to quaternary structure, the nucleosome is a histone octamer containing two molecules each of H2A, H2B, H3 and H4 assembled in one H3-H4 heterotetramer and two H2A-H2B heterodimers. Monoubiquitination at Lys-36 (H2BK34Ub) by the MSL1/MSL2 dimer is required for histone H3 'Lys-4' (H3K4me) and 'Lys-79' (H3K79me) methylation and transcription activation at specific gene loci, such as HOXA9 and MEIS1 loci. Similarly, monoubiquitination at Lys-122 (H2BK120Ub) by the RNF20/40 complex gives a specific tag for epigenetic transcriptional activation and is also prerequisite for histone H3 'Lys-4' and 'Lys-79' methylation. It also functions cooperatively with the FACT dimer to stimulate elongation by RNA polymerase II. H2BK120Ub also acts as a regulator of mRNA splicing: deubiquitination by USP49 is required for efficient cotranscriptional splicing of a large set of exons. In terms of processing, crotonylation (Kcr) is specifically present in male germ cells and marks testis-specific genes in post-meiotic cells, including X-linked genes that escape sex chromosome inactivation in haploid cells. Crotonylation marks active promoters and enhancers and confers resistance to transcriptional repressors. It is also associated with post-meiotically activated genes on autosomes. Post-translationally, acetylated during spermatogenesis. Acetylated form is most abundant in spermatogonia compared to spermatocytes and round spermatids. Phosphorylated at Thr-117 in spermatogonia, spermatocytes and round spermatids. In terms of processing, methylated at Lys-118 in spermatogonia, spermatocytes and round spermatids. Post-translationally, lactylated in macrophages by EP300/P300 by using lactoyl-CoA directly derived from endogenous or exogenous lactate, leading to stimulates gene transcription. Mainly expressed in testis, and the corresponding protein is also present in mature sperm (at protein level). Also found in some fat cells.

Its subcellular location is the nucleus. It is found in the chromosome. Functionally, variant histone specifically required to direct the transformation of dissociating nucleosomes to protamine in male germ cells. Entirely replaces classical histone H2B prior nucleosome to protamine transition and probably acts as a nucleosome dissociating factor that creates a more dynamic chromatin, facilitating the large-scale exchange of histones. Core component of nucleosome. Nucleosomes wrap and compact DNA into chromatin, limiting DNA accessibility to the cellular machineries which require DNA as a template. Histones thereby play a central role in transcription regulation, DNA repair, DNA replication and chromosomal stability. DNA accessibility is regulated via a complex set of post-translational modifications of histones, also called histone code, and nucleosome remodeling. Also found in fat cells, its function and the presence of post-translational modifications specific to such cells are still unclear. This Homo sapiens (Human) protein is Histone H2B type 1-A.